The sequence spans 83 residues: Small ribosomal subunit protein uS17 (83 aa).

This sequence belongs to the universal ribosomal protein uS17 family. As to quaternary structure, part of the 30S ribosomal subunit.

Its function is as follows. One of the primary rRNA binding proteins, it binds specifically to the 5'-end of 16S ribosomal RNA. The sequence is that of Small ribosomal subunit protein uS17 from Chlamydia trachomatis serovar L2 (strain ATCC VR-902B / DSM 19102 / 434/Bu).